Here is a 266-residue protein sequence, read N- to C-terminus: uncharacterized protein (266 aa).

Residues 112 to 261 enclose the TIR domain; the sequence is LEKKIFISHS…KKWERIKAKF (150 aa). Glu-192 is a catalytic residue.

It carries out the reaction NAD(+) + H2O = ADP-D-ribose + nicotinamide + H(+). This is an uncharacterized protein from Bacillus subtilis (strain 168).